Consider the following 578-residue polypeptide: Acyl-coenzyme A synthetase ACSM5, mitochondrial (578 aa).

The transit peptide at Met-1–Ile-22 directs the protein to the mitochondrion. An N6-acetyllysine; alternate modification is found at Lys-96. Residue Lys-96 is modified to N6-succinyllysine; alternate. Lys-151 carries the N6-acetyllysine modification. Thr-229 to Lys-237 lines the ATP pocket. Lys-335 carries the N6-acetyllysine modification. ATP contacts are provided by residues Glu-367–Ser-372, Asp-454, Arg-469, and Lys-565.

The protein belongs to the ATP-dependent AMP-binding enzyme family. Mg(2+) is required as a cofactor. The cofactor is Mn(2+).

It is found in the mitochondrion matrix. The enzyme catalyses a medium-chain fatty acid + ATP + CoA = a medium-chain fatty acyl-CoA + AMP + diphosphate. In terms of biological role, catalyzes the activation of fatty acids by CoA to produce an acyl-CoA, the first step in fatty acid metabolism. This Rattus norvegicus (Rat) protein is Acyl-coenzyme A synthetase ACSM5, mitochondrial (Acsm5).